A 296-amino-acid polypeptide reads, in one-letter code: Short-chain dehydrogenase/reductase ascJ (296 aa).

Residues Ile28, Asp66, and Asn93 each contribute to the NADP(+) site. The active-site Proton donor is Ser155. NADP(+)-binding residues include Tyr168, Lys172, and Thr205. Tyr168 acts as the Proton acceptor in catalysis. Lys172 (lowers pKa of active site Tyr) is an active-site residue.

Belongs to the short-chain dehydrogenases/reductases (SDR) family.

The enzyme catalyses ascofuranol + A = ascofuranone + AH2. It participates in secondary metabolite biosynthesis; terpenoid biosynthesis. In terms of biological role, short-chain dehydrogenase/reductase; part of the asc-2 gene cluster that mediates the biosynthesis of ascofuranone, a strong inhibitor of cyanide-insensitive alternative oxidases and a promising drug candidate against African trypanosomiasis. The first step in the pathway is performed by the non-reducing polyketide synthase ascC that produces orsellinic acid by condensing acetyl-CoA with 3 malonyl-CoA units. Orsellinic acid is then prenylated by the prenyltransferase ascA to yield ilicicolinic acid B. Ilicicolinic acid B is further reduced to ilicicolin B by the reductase ascB. The halogenase ascD then chlorinates ilicicolin B to produce ilicicolin A which is converted to ilicicolin A epoxide by the cytochrome P450 monooxygenase ascE that catalyzes stereoselective epoxidation of the terminal double bond of the prenyl group. Ilicicolin A epoxide is the last common precursor for the biosynthesis of ascofuranone and ascochlorin. The terpene cyclase ascF produces a monocyclic terpene, and the cyclization reaction is proposed to be initiated by protonation of the terminal epoxide of ilicicolin A epoxide to generate a monocyclic tertiarycation, which is followed by a series of hydride and methyl shifts with abstraction of proton, leading to the formation of the (14S,15R,19R)-trimethylcyclohexanone ring structure of ilicicolin C, which is finally reduced to ascochlorin by the dehydrogenase ascG. On the other hand, ilicicolin A epoxide is hydroxylated by the cytochrome P450 monooxygenase ascH, and the resultant product is cyclized by the terpene cyclase ascI to ascofuranol via protonation-initiated epoxide ring opening, which facilitates the 6-endo-tet cyclization to form the tetrahy-drofuran ring. Finally, ascofuranol is oxidized into ascofuranone by ascJ. The protein is Short-chain dehydrogenase/reductase ascJ of Acremonium egyptiacum (Oospora egyptiaca).